The sequence spans 432 residues: DEAD-box ATP-dependent RNA helicase 56 (432 aa).

A coiled-coil region spans residues 1–28; it reads MAEAEVKDNEVYEEDLVDYEEEVENGTD. The short motif at 51–79 is the Q motif element; the sequence is SGFRDFLLKPELLRAIQDCGFEHPSEVQH. The Helicase ATP-binding domain occupies 82-255; the sequence is IPQAILGMDV…KKFMQDPMEI (174 aa). Residue 95–102 coordinates ATP; sequence AKSGMGKT. A DEAD box motif is present at residues 202-205; that stretch reads DECD. A Helicase C-terminal domain is found at 283-428; that stretch reads KLNDLLDALD…ELPEQIDTST (146 aa).

This sequence belongs to the DEAD box helicase family. DECD subfamily. In terms of assembly, homodimer and heterodimer with AIP2. Interacts with API5.

It is found in the nucleus. It carries out the reaction ATP + H2O = ADP + phosphate + H(+). Functionally, ATP-binding RNA helicase involved in pre-mRNA splicing. Required for the export of mRNA out of the nucleus. Required for tapetal programmed cell death (PCD) and degeneration during anther development. Forms dimer with AIP2 and binds the promoter region of the cysteine protease CP1. Can complement the yeast RNA helicase SUB2. Plants silencing AIP1 and AIP2 are male sterile. The protein is DEAD-box ATP-dependent RNA helicase 56 of Oryza sativa subsp. japonica (Rice).